The sequence spans 87 residues: Small ribosomal subunit protein uS15 (87 aa).

Belongs to the universal ribosomal protein uS15 family. Part of the 30S ribosomal subunit. Forms a bridge to the 50S subunit in the 70S ribosome, contacting the 23S rRNA.

Functionally, one of the primary rRNA binding proteins, it binds directly to 16S rRNA where it helps nucleate assembly of the platform of the 30S subunit by binding and bridging several RNA helices of the 16S rRNA. In terms of biological role, forms an intersubunit bridge (bridge B4) with the 23S rRNA of the 50S subunit in the ribosome. The protein is Small ribosomal subunit protein uS15 of Clostridium acetobutylicum (strain ATCC 824 / DSM 792 / JCM 1419 / IAM 19013 / LMG 5710 / NBRC 13948 / NRRL B-527 / VKM B-1787 / 2291 / W).